Here is a 709-residue protein sequence, read N- to C-terminus: Caprin-1 (709 aa).

Low complexity-rich tracts occupy residues 1 to 15 (MPSA…SKSS) and 22 to 43 (GSSG…QHPA). Residues 1 to 50 (MPSATSHSGSGSKSSGPPPPSGSSGSEAAAGAGAAAPASQHPATGTGAVQ) form a disordered region. N-acetylproline is present on P2. The residue at position 2 (P2) is an N-acetylalanine. A Phosphoserine modification is found at S10. Residues 60–94 (VIDKKLRNLEKKKGKLDDYQERMNKGERLNQDQLD) adopt a coiled-coil conformation. S115 bears the Phosphoserine mark. A coiled-coil region spans residues 125-153 (KTIKKTARREQLMREEAEQKRLKTVLELQ). R165 is modified (omega-N-methylarginine). The disordered stretch occupies residues 260–291 (EEAASAPAVEDQVPEAEPEPAEEYTEQSEVES). Residues 271–291 (QVPEAEPEPAEEYTEQSEVES) show a composition bias toward acidic residues. A phosphoserine mark is found at S335 and S343. The segment at 360–381 (QDLMAQMQGPYNFIQDSMLDFE) is G3BP1-binding. Disordered regions lie at residues 417–446 (LAQP…TASQ), 475–499 (TDQT…GTSK), and 524–709 (APVP…QQVN). A compositionally biased stretch (polar residues) spans 433-446 (PLVSSTSEGYTASQ). 2 stretches are compositionally biased toward low complexity: residues 477–491 (QTTA…SQPQ) and 537–570 (QQNQ…QTVV). Residues 577–605 (PDQSHQVTGNHQQPPQQNTGFPRSNQPYY) show a composition bias toward polar residues. At Y625 the chain carries Phosphotyrosine; by EPHA4. 2 positions are modified to omega-N-methylarginine: R626 and R633. Y636 and Y639 each carry phosphotyrosine; by EPHA4. At R640 the chain carries Omega-N-methylarginine. The segment covering 642–657 (SFSNTPNSGYTQSQFS) has biased composition (polar residues). O-linked (GlcNAc) serine glycosylation is found at S644 and S649. 4 positions are modified to phosphotyrosine; by EPHA4: Y651, Y662, Y665, and Y670. Low complexity-rich tracts occupy residues 676-686 (RGSGQSGPRGA) and 697-709 (NRGM…QQVN). R698 carries the post-translational modification Asymmetric dimethylarginine; alternate. An Omega-N-methylarginine; alternate modification is found at R698.

It belongs to the caprin family. In terms of assembly, may form homomultimers. Interacts with G3BP1; interaction is direct and promotes stress granule formation. Interacts with G3BP2; interaction is direct and promotes stress granule formation. Interacts with PQBP1. Interacts with DDX3X. Interacts (when phosphorylated by EPHA4) with FMR1; interaction with FMR1 promotes formation of a membraneless compartment. As to quaternary structure, (Microbial infection) Interacts with Zika virus capsid protein C; this interaction is probably linked to the inhibition of stress granules formation by the virus. (Microbial infection) Interacts with rotavirus A non-structural protein 5; this interaction probably plays a role in the sequestration of CAPRIN1 in viral factories. In terms of assembly, (Microbial infection) Interacts with Japanese encephalitis virus capsid protein C; this interaction is involved in the suppression of the integrated stress response by the virus. Post-translationally, tyrosine phosphorylation by EPHA4 promotes interaction with FMR1 and liquid-liquid phase separation (LLPS) for the formation of a membraneless compartment that concentrates mRNAs with associated regulatory factors. O-glycosylated (O-GlcNAcylated), in a cell cycle-dependent manner. O-glycosylation by OGT inhibit ability to undergo liquid-liquid phase separation (LLPS). As to expression, ubiquitous.

It is found in the cytoplasm. The protein localises to the cytoplasmic ribonucleoprotein granule. Its subcellular location is the cytosol. The protein resides in the cell projection. It localises to the dendrite. It is found in the lamellipodium. Its activity is regulated as follows. Ability to mediate liquid-liquid phase separation is regulated by ATP: moderate concentrations of ATP enhance phase separation, whereas high concentrations of ATP lead to inhibition of phase separation. Functionally, mRNA-binding protein that acts as a regulator of mRNAs transport, translation and/or stability, and which is involved in neurogenesis, synaptic plasticity in neurons and cell proliferation and migration in multiple cell types. Plays an essential role in cytoplasmic stress granule formation. Acts as an mRNA regulator by mediating formation of some phase-separated membraneless compartment: undergoes liquid-liquid phase separation upon binding to target mRNAs, leading to assemble mRNAs into cytoplasmic ribonucleoprotein granules that concentrate mRNAs with associated regulatory factors. Undergoes liquid-liquid phase separation following phosphorylation and interaction with FMR1, promoting formation of cytoplasmic ribonucleoprotein granules that concentrate mRNAs with factors that inhibit translation and mediate deadenylation of target mRNAs. In these cytoplasmic ribonucleoprotein granules, CAPRIN1 mediates recruitment of CNOT7 deadenylase, leading to mRNA deadenylation and degradation. Binds directly and selectively to MYC and CCND2 mRNAs. In neuronal cells, directly binds to several mRNAs associated with RNA granules, including BDNF, CAMK2A, CREB1, MAP2, NTRK2 mRNAs, as well as to GRIN1 and KPNB1 mRNAs, but not to rRNAs. This Homo sapiens (Human) protein is Caprin-1.